We begin with the raw amino-acid sequence, 166 residues long: MFIKGVILSSYGVNGYARVKSISNNFCDFINLKNNKVLLKKSNSSSVEVKVVDVNIKGNSLFLKFEEIDTPEAVRPLIGFELWVDDSLASSLKEGEYYLGKLIGYAIVNNNKKLGEVVAFFEYLNSVFLEVRVGIKFFFIPFLSIYIGDINTQEKTIELKVLDLLK.

The 73-residue stretch at E94–K166 folds into the PRC barrel domain.

Belongs to the RimM family. Binds ribosomal protein uS19.

The protein resides in the cytoplasm. Functionally, an accessory protein needed during the final step in the assembly of 30S ribosomal subunit, possibly for assembly of the head region. Essential for efficient processing of 16S rRNA. May be needed both before and after RbfA during the maturation of 16S rRNA. It has affinity for free ribosomal 30S subunits but not for 70S ribosomes. This chain is Ribosome maturation factor RimM, found in Borreliella burgdorferi (strain ATCC 35210 / DSM 4680 / CIP 102532 / B31) (Borrelia burgdorferi).